We begin with the raw amino-acid sequence, 484 residues long: Glutamate--tRNA ligase (484 aa).

A 'HIGH' region motif is present at residues 11-21 (PSPTGLLHIGN). Positions 255–259 (KLSKR) match the 'KMSKS' region motif. Lysine 258 is a binding site for ATP.

It belongs to the class-I aminoacyl-tRNA synthetase family. Glutamate--tRNA ligase type 1 subfamily. Monomer.

Its subcellular location is the cytoplasm. The enzyme catalyses tRNA(Glu) + L-glutamate + ATP = L-glutamyl-tRNA(Glu) + AMP + diphosphate. Functionally, catalyzes the attachment of glutamate to tRNA(Glu) in a two-step reaction: glutamate is first activated by ATP to form Glu-AMP and then transferred to the acceptor end of tRNA(Glu). In Streptococcus agalactiae serotype Ia (strain ATCC 27591 / A909 / CDC SS700), this protein is Glutamate--tRNA ligase.